A 326-amino-acid polypeptide reads, in one-letter code: Glycerol-3-phosphate dehydrogenase [NAD(P)+] (326 aa).

Residues W15, R35, and K107 each contribute to the NADPH site. Residues K107, G135, and S137 each coordinate sn-glycerol 3-phosphate. Residue A139 coordinates NADPH. Sn-glycerol 3-phosphate contacts are provided by K190, D243, S253, R254, and N255. Residue K190 is the Proton acceptor of the active site. R254 provides a ligand contact to NADPH. NADPH is bound by residues L273 and E275.

It belongs to the NAD-dependent glycerol-3-phosphate dehydrogenase family.

The protein resides in the cytoplasm. It catalyses the reaction sn-glycerol 3-phosphate + NAD(+) = dihydroxyacetone phosphate + NADH + H(+). The enzyme catalyses sn-glycerol 3-phosphate + NADP(+) = dihydroxyacetone phosphate + NADPH + H(+). The protein operates within membrane lipid metabolism; glycerophospholipid metabolism. Catalyzes the reduction of the glycolytic intermediate dihydroxyacetone phosphate (DHAP) to sn-glycerol 3-phosphate (G3P), the key precursor for phospholipid synthesis. The chain is Glycerol-3-phosphate dehydrogenase [NAD(P)+] from Bradyrhizobium diazoefficiens (strain JCM 10833 / BCRC 13528 / IAM 13628 / NBRC 14792 / USDA 110).